The following is a 240-amino-acid chain: Alkaline phosphatase synthesis transcriptional regulatory protein PhoP (240 aa).

The Response regulatory domain maps to 4–118 (KILVVDDEES…EVNARVKAIL (115 aa)). Asp-53 carries the 4-aspartylphosphate modification. The segment at residues 136–235 (EGQIVIGDLK…IRGLGYKLEE (100 aa)) is a DNA-binding region (ompR/PhoB-type).

Phosphorylated by PhoR.

Its subcellular location is the cytoplasm. Member of the two-component regulatory system PhoP/PhoR involved in the regulation of alkaline phosphatase genes phoA and phoB and of phosphodiesterase. The chain is Alkaline phosphatase synthesis transcriptional regulatory protein PhoP (phoP) from Bacillus subtilis (strain 168).